A 615-amino-acid polypeptide reads, in one-letter code: 9-cis-epoxycarotenoid dioxygenase NCED1, chloroplastic (615 aa).

The transit peptide at 1 to 41 (MPSPASNTWINTTLPSSCSSPFKDLASTSSSPTTLLPFKKR) directs the protein to the chloroplast. Disordered stretches follow at residues 20-45 (SPFK…SSSN) and 62-101 (YQPT…KQPF). Low complexity-rich tracts occupy residues 27–37 (STSSSPTTLLP) and 64–86 (PTST…TTTT). 3 residues coordinate Fe cation: His-316, His-365, and His-430. Residues 571–592 (KEWKSELQIVNAQNLKLEASIK) are a coiled coil. His-602 lines the Fe cation pocket.

It belongs to the carotenoid oxygenase family. Requires Fe(2+) as cofactor.

The protein resides in the plastid. It localises to the chloroplast thylakoid membrane. It catalyses the reaction a 9-cis-epoxycarotenoid + O2 = a 12'-apo-carotenal + 2-cis,4-trans-xanthoxin. The catalysed reaction is 9-cis-violaxanthin + O2 = (3S,5R,6S)-5,6-epoxy-3-hydroxy-5,6-dihydro-12'-apo-beta-caroten-12'-al + 2-cis,4-trans-xanthoxin. It carries out the reaction 9'-cis-neoxanthin + O2 = (3S,5R,6R)-3,5-dihydroxy-6,7-didehydro-5,6-dihydro-12'-apo-beta-caroten-12'-al + 2-cis,4-trans-xanthoxin. Has a 11,12(11',12') 9-cis epoxycarotenoid cleavage activity. Catalyzes the first step of abscisic-acid biosynthesis from carotenoids, in response to water stress. Active on 9-cis-violaxanthin and 9'-cis-neoxanthin, but not on the all-trans isomers of violaxanthin and neoxanthin. The chain is 9-cis-epoxycarotenoid dioxygenase NCED1, chloroplastic (NCED1) from Phaseolus vulgaris (Kidney bean).